Consider the following 571-residue polypeptide: Urease subunit alpha (571 aa).

The Urease domain maps to 132–571 (GGIDSHIHFI…LPMAQRYFLF (440 aa)). Residues H137, H139, and K220 each coordinate Ni(2+). K220 bears the N6-carboxylysine mark. H222 serves as a coordination point for substrate. Ni(2+)-binding residues include H249 and H275. The Proton donor role is filled by H323. D363 serves as a coordination point for Ni(2+).

The protein belongs to the metallo-dependent hydrolases superfamily. Urease alpha subunit family. As to quaternary structure, heterotrimer of UreA (gamma), UreB (beta) and UreC (alpha) subunits. Three heterotrimers associate to form the active enzyme. Ni cation serves as cofactor. Post-translationally, carboxylation allows a single lysine to coordinate two nickel ions.

Its subcellular location is the cytoplasm. It carries out the reaction urea + 2 H2O + H(+) = hydrogencarbonate + 2 NH4(+). The protein operates within nitrogen metabolism; urea degradation; CO(2) and NH(3) from urea (urease route): step 1/1. The polypeptide is Urease subunit alpha (Kocuria rhizophila (strain ATCC 9341 / DSM 348 / NBRC 103217 / DC2201)).